A 503-amino-acid chain; its full sequence is Probable cytosol aminopeptidase (503 aa).

2 residues coordinate Mn(2+): K274 and D279. Residue K286 is part of the active site. The Mn(2+) site is built by D297, D356, and E358. The active site involves R360.

Belongs to the peptidase M17 family. It depends on Mn(2+) as a cofactor.

It localises to the cytoplasm. It carries out the reaction Release of an N-terminal amino acid, Xaa-|-Yaa-, in which Xaa is preferably Leu, but may be other amino acids including Pro although not Arg or Lys, and Yaa may be Pro. Amino acid amides and methyl esters are also readily hydrolyzed, but rates on arylamides are exceedingly low.. It catalyses the reaction Release of an N-terminal amino acid, preferentially leucine, but not glutamic or aspartic acids.. Functionally, presumably involved in the processing and regular turnover of intracellular proteins. Catalyzes the removal of unsubstituted N-terminal amino acids from various peptides. The polypeptide is Probable cytosol aminopeptidase (Burkholderia multivorans (strain ATCC 17616 / 249)).